The primary structure comprises 668 residues: DNA ligase (668 aa).

NAD(+)-binding positions include Asp37 to Asp41, Ser86 to Met87, and Glu116. The active-site N6-AMP-lysine intermediate is the Lys118. NAD(+) is bound by residues Arg139, Glu173, Lys288, and Lys312. Zn(2+) is bound by residues Cys406, Cys409, Cys424, and Cys429. The region spanning Ala591–Glu668 is the BRCT domain.

Belongs to the NAD-dependent DNA ligase family. LigA subfamily. The cofactor is Mg(2+). Mn(2+) serves as cofactor.

It carries out the reaction NAD(+) + (deoxyribonucleotide)n-3'-hydroxyl + 5'-phospho-(deoxyribonucleotide)m = (deoxyribonucleotide)n+m + AMP + beta-nicotinamide D-nucleotide.. Its function is as follows. DNA ligase that catalyzes the formation of phosphodiester linkages between 5'-phosphoryl and 3'-hydroxyl groups in double-stranded DNA using NAD as a coenzyme and as the energy source for the reaction. It is essential for DNA replication and repair of damaged DNA. The protein is DNA ligase of Lactobacillus helveticus (strain DPC 4571).